The sequence spans 463 residues: MAALRALCGFRGVAAQVLRPGAGVRLPIQPSRGVRQWQPDVEWAQQFGGAVMYPSKETAHWKPPPWNDVDPPKDTIVKNITLNFGPQHPAAHGVLRLVMELSGEMVRKCDPHIGLLHRGTEKLIEYKTYLQALPYFDRLDYVSMMCNEQAYSLAVEKLLNIRPPPRAQWIRVLFGEITRLLNHIMAVTTHALDLGAMTPFFWLFEEREKMFEFYERVSGARMHAAYIRPGGVHQDLPLGLMDDIYQFSKNFSLRLDELEELLTNNRIWRNRTIDIGVVTAEEALNYGFSGVMLRGSGIQWDLRKTQPYDVYDQVEFDVPVGSRGDCYDRYLCRVEEMRQSLRIIAQCLNKMPPGEIKVDDAKVSPPKRAEMKTSMESLIHHFKLYTEGYQVPPGATYTAIEAPKGEFGVYLVSDGSSRPYRCKIKAPGFAHLAGLDKMSKGHMLADVVAIIGTQDIVFGEVDR.

The transit peptide at 1-33 (MAALRALCGFRGVAAQVLRPGAGVRLPIQPSRG) directs the protein to the mitochondrion. Lys-62 carries the N6-acetyllysine modification. The residue at position 118 (Arg-118) is a Symmetric dimethylarginine. [4Fe-4S] cluster contacts are provided by Cys-326, Cys-332, and Cys-347.

The protein belongs to the complex I 49 kDa subunit family. In terms of assembly, core subunit of respiratory chain NADH dehydrogenase (Complex I) which is composed of 45 different subunits. Component of the iron-sulfur (IP) fragment of the enzyme. Interacts with NDUFAF3. Interacts with NDUFAF7. Interacts with CERS2. [4Fe-4S] cluster serves as cofactor. Dimethylation at Arg-118 by NDUFAF7 takes place after NDUFS2 assembles into the complex I, leading to stabilize the early intermediate complex.

The protein resides in the mitochondrion inner membrane. It carries out the reaction a ubiquinone + NADH + 5 H(+)(in) = a ubiquinol + NAD(+) + 4 H(+)(out). In terms of biological role, core subunit of the mitochondrial membrane respiratory chain NADH dehydrogenase (Complex I) which catalyzes electron transfer from NADH through the respiratory chain, using ubiquinone as an electron acceptor. Essential for the catalytic activity of complex I. Essential for the assembly of complex I. Redox-sensitive, critical component of the oxygen-sensing pathway in the pulmonary vasculature which plays a key role in acute pulmonary oxygen-sensing and hypoxic pulmonary vasoconstriction. Plays an important role in carotid body sensing of hypoxia. Essential for glia-like neural stem and progenitor cell proliferation, differentiation and subsequent oligodendrocyte or neuronal maturation. This Homo sapiens (Human) protein is NADH dehydrogenase [ubiquinone] iron-sulfur protein 2, mitochondrial (NDUFS2).